The primary structure comprises 589 residues: Putative phospholipase B-like 2 (589 aa).

The N-terminal stretch at 1 to 41 is a signal peptide; sequence MVAPMYGSPGGRLARAVTRALALALVLALLVGLFLSGLTGA. Residues N88 and N110 are each glycosylated (N-linked (GlcNAc...) asparagine). A disulfide bond links C142 and C152. Residues N174, N231, N436, and N465 are each glycosylated (N-linked (GlcNAc...) asparagine). C492 and C495 are joined by a disulfide. N515 carries an N-linked (GlcNAc...) asparagine glycan.

This sequence belongs to the phospholipase B-like family. As to quaternary structure, interacts with IGF2R. Glycosylated; contains mannose 6-phosphate sugars.

The protein resides in the lysosome lumen. Putative phospholipase. This Bos taurus (Bovine) protein is Putative phospholipase B-like 2 (PLBD2).